We begin with the raw amino-acid sequence, 157 residues long: SsrA-binding protein (157 aa).

Positions 130–157 are disordered; sequence HDKRQDMAKKDSQRRIQKELGQRQKGME. The segment covering 132–157 has biased composition (basic and acidic residues); sequence KRQDMAKKDSQRRIQKELGQRQKGME.

This sequence belongs to the SmpB family.

The protein resides in the cytoplasm. In terms of biological role, required for rescue of stalled ribosomes mediated by trans-translation. Binds to transfer-messenger RNA (tmRNA), required for stable association of tmRNA with ribosomes. tmRNA and SmpB together mimic tRNA shape, replacing the anticodon stem-loop with SmpB. tmRNA is encoded by the ssrA gene; the 2 termini fold to resemble tRNA(Ala) and it encodes a 'tag peptide', a short internal open reading frame. During trans-translation Ala-aminoacylated tmRNA acts like a tRNA, entering the A-site of stalled ribosomes, displacing the stalled mRNA. The ribosome then switches to translate the ORF on the tmRNA; the nascent peptide is terminated with the 'tag peptide' encoded by the tmRNA and targeted for degradation. The ribosome is freed to recommence translation, which seems to be the essential function of trans-translation. This is SsrA-binding protein from Alkaliphilus metalliredigens (strain QYMF).